A 131-amino-acid chain; its full sequence is Fumarate reductase subunit C (131 aa).

Helical transmembrane passes span 30-50 (EGTC…VFAL), 58-78 (AGFV…VTLI), and 109-129 (IVRG…AVAL).

It belongs to the FrdC family. Part of an enzyme complex containing four subunits: a flavoprotein (FrdA), an iron-sulfur protein (FrdB), and two hydrophobic anchor proteins (FrdC and FrdD).

It localises to the cell inner membrane. Its function is as follows. Two distinct, membrane-bound, FAD-containing enzymes are responsible for the catalysis of fumarate and succinate interconversion; fumarate reductase is used in anaerobic growth, and succinate dehydrogenase is used in aerobic growth. Anchors the catalytic components of the fumarate reductase complex to the cell inner membrane, binds quinones. This chain is Fumarate reductase subunit C, found in Proteus mirabilis (strain HI4320).